A 378-amino-acid chain; its full sequence is MCGVRVAIVAESFLPQVNGVSNSVVKVLEHLRRTGHEALVIAPDTPPGEDRAERLHDGVRVHRVPSRMFPKVTTLPLGVPTFRMLRALRGFDPDVVHLASPALLGYGGLHAARRLGVPTVAVYQTDVPGFASSYGIPMTARAAWAWFRHLHRLADRTLAPSTATMESLIAQGIPRVHRWARGVDVQRFAPSARNEVLRRRWSPDGKPIVGFVGRLAPEKHVDRLTGLAASGAVRLVIVGDGIDRARLQSAMPTAVFTGARYGKELAEAYASMDVFVHSGEHETFCQVVQEALASGLPVIAPDAGGPRDLITPHRTGLLLPVGEFEHRLPDAVAHLVHERQRYALAARRSVLGRSWPVVCDELLGHYEAVRGRRTTQAA.

It belongs to the glycosyltransferase group 1 family. Glycosyltransferase 4 subfamily.

It participates in phospholipid metabolism; phosphatidylinositol metabolism. In terms of biological role, catalyzes the addition of a mannose residue from GDP-D-mannose to GlcAGroAc2 to generate 1,2-di-O-C16/C18:1-(alpha-D-mannopyranosyl)-(1-4)-(alpha-D-glucopyranosyluronic acid)-(1-3)-glycerol(ManGlcAGroAc2). The sequence is that of GDP-mannose-dependent alpha-mannosyltransferase (mgtA) from Mycobacterium tuberculosis (strain CDC 1551 / Oshkosh).